Consider the following 213-residue polypeptide: Octanoyltransferase (213 aa).

One can recognise a BPL/LPL catalytic domain in the interval 32 to 207 (DSTLDEIWLV…NILALLNNPD (176 aa)). Substrate contacts are provided by residues 71–78 (RGGQVTYH), 138–140 (SLG), and 151–153 (GLA). Cys-169 (acyl-thioester intermediate) is an active-site residue.

It belongs to the LipB family.

Its subcellular location is the cytoplasm. The catalysed reaction is octanoyl-[ACP] + L-lysyl-[protein] = N(6)-octanoyl-L-lysyl-[protein] + holo-[ACP] + H(+). The protein operates within protein modification; protein lipoylation via endogenous pathway; protein N(6)-(lipoyl)lysine from octanoyl-[acyl-carrier-protein]: step 1/2. Its function is as follows. Catalyzes the transfer of endogenously produced octanoic acid from octanoyl-acyl-carrier-protein onto the lipoyl domains of lipoate-dependent enzymes. Lipoyl-ACP can also act as a substrate although octanoyl-ACP is likely to be the physiological substrate. The sequence is that of Octanoyltransferase from Escherichia coli O8 (strain IAI1).